The chain runs to 110 residues: Protein RnfH (110 aa).

A disordered region spans residues 86 to 110; the sequence is RKRAAQQAKDQEEKKKAEKSANKEN. The segment covering 94–110 has biased composition (basic and acidic residues); the sequence is KDQEEKKKAEKSANKEN.

Belongs to the UPF0125 (RnfH) family.

The chain is Protein RnfH from Mannheimia succiniciproducens (strain KCTC 0769BP / MBEL55E).